A 340-amino-acid chain; its full sequence is Thermopsin (340 aa).

The N-terminal stretch at 1–28 (MNFKSICLIILLSALIIPYIPQNIYFFP) is a signal peptide. A propeptide spanning residues 29–41 (HRNTTGATISSGL) is cleaved from the precursor. N-linked (GlcNAc...) asparagine glycans are attached at residues asparagine 31, asparagine 65, asparagine 85, asparagine 117, asparagine 148, asparagine 197, asparagine 277, asparagine 287, asparagine 327, and asparagine 334.

Belongs to the peptidase A5 family.

It localises to the secreted. It carries out the reaction Specificity similar to pepsin A, prefers bulky hydrophobic side-chains on either side of the scissible bond.. Its function is as follows. May represent a new class of acid proteases. It digests proteins and peptides in acidic solution. This chain is Thermopsin (thpS), found in Sulfolobus acidocaldarius (strain ATCC 33909 / DSM 639 / JCM 8929 / NBRC 15157 / NCIMB 11770).